Consider the following 215-residue polypeptide: Large ribosomal subunit protein uL4 (215 aa).

The segment at 51–88 is disordered; that stretch reads KGMGEVSGTTKKPYRQKGTGNARQGSLRAPQFRTGGAV.

It belongs to the universal ribosomal protein uL4 family. Part of the 50S ribosomal subunit.

In terms of biological role, one of the primary rRNA binding proteins, this protein initially binds near the 5'-end of the 23S rRNA. It is important during the early stages of 50S assembly. It makes multiple contacts with different domains of the 23S rRNA in the assembled 50S subunit and ribosome. Functionally, forms part of the polypeptide exit tunnel. The polypeptide is Large ribosomal subunit protein uL4 (Granulibacter bethesdensis (strain ATCC BAA-1260 / CGDNIH1)).